A 393-amino-acid polypeptide reads, in one-letter code: NAD(P)H-quinone oxidoreductase subunit H, chloroplastic (393 aa).

Belongs to the complex I 49 kDa subunit family. NDH is composed of at least 16 different subunits, 5 of which are encoded in the nucleus.

It localises to the plastid. The protein resides in the chloroplast thylakoid membrane. The enzyme catalyses a plastoquinone + NADH + (n+1) H(+)(in) = a plastoquinol + NAD(+) + n H(+)(out). It catalyses the reaction a plastoquinone + NADPH + (n+1) H(+)(in) = a plastoquinol + NADP(+) + n H(+)(out). In terms of biological role, NDH shuttles electrons from NAD(P)H:plastoquinone, via FMN and iron-sulfur (Fe-S) centers, to quinones in the photosynthetic chain and possibly in a chloroplast respiratory chain. The immediate electron acceptor for the enzyme in this species is believed to be plastoquinone. Couples the redox reaction to proton translocation, and thus conserves the redox energy in a proton gradient. This Oryza nivara (Indian wild rice) protein is NAD(P)H-quinone oxidoreductase subunit H, chloroplastic.